A 582-amino-acid polypeptide reads, in one-letter code: 5-aminolevulinate synthase, erythroid-specific, mitochondrial (582 aa).

The N-terminal 44 residues, 1-44 (MLLQRCPVLIRSPTAILGKMIKTHQFLIGIGRCPILATQGTTCS), are a transit peptide targeting the mitochondrion. A succinyl-CoA-binding site is contributed by Arg-158. Positions 253 and 254 each coordinate pyridoxal 5'-phosphate. Residues Ser-275 and Lys-294 each coordinate succinyl-CoA. Pyridoxal 5'-phosphate is bound by residues Ser-327, His-355, and Thr-383. The active site involves Lys-386. Lys-386 carries the post-translational modification N6-(pyridoxal phosphate)lysine. The pyridoxal 5'-phosphate site is built by Thr-415 and Thr-416. Thr-503 serves as a coordination point for succinyl-CoA.

It belongs to the class-II pyridoxal-phosphate-dependent aminotransferase family. In terms of assembly, homodimer. Pyridoxal 5'-phosphate is required as a cofactor.

It is found in the mitochondrion inner membrane. The catalysed reaction is succinyl-CoA + glycine + H(+) = 5-aminolevulinate + CO2 + CoA. The protein operates within porphyrin-containing compound metabolism; protoporphyrin-IX biosynthesis; 5-aminolevulinate from glycine: step 1/1. In terms of biological role, catalyzes the pyridoxal 5'-phosphate (PLP)-dependent condensation of succinyl-CoA and glycine to form aminolevulinic acid (ALA), with CoA and CO2 as by-products. Contributes significantly to heme formation during erythropoiesis. The protein is 5-aminolevulinate synthase, erythroid-specific, mitochondrial (ALAS2) of Delphinapterus leucas (Beluga whale).